Consider the following 67-residue polypeptide: Large ribosomal subunit protein bL35 (67 aa).

The protein belongs to the bacterial ribosomal protein bL35 family.

In Novosphingobium aromaticivorans (strain ATCC 700278 / DSM 12444 / CCUG 56034 / CIP 105152 / NBRC 16084 / F199), this protein is Large ribosomal subunit protein bL35.